The sequence spans 381 residues: Probable tRNA sulfurtransferase (381 aa).

The 109-residue stretch at 55–163 (GECLENLNKV…DDEAFIYHEK (109 aa)) folds into the THUMP domain. ATP is bound by residues 181-182 (LV), K265, G287, and Q296.

The protein belongs to the ThiI family.

Its subcellular location is the cytoplasm. It carries out the reaction [ThiI sulfur-carrier protein]-S-sulfanyl-L-cysteine + a uridine in tRNA + 2 reduced [2Fe-2S]-[ferredoxin] + ATP + H(+) = [ThiI sulfur-carrier protein]-L-cysteine + a 4-thiouridine in tRNA + 2 oxidized [2Fe-2S]-[ferredoxin] + AMP + diphosphate. It catalyses the reaction [ThiS sulfur-carrier protein]-C-terminal Gly-Gly-AMP + S-sulfanyl-L-cysteinyl-[cysteine desulfurase] + AH2 = [ThiS sulfur-carrier protein]-C-terminal-Gly-aminoethanethioate + L-cysteinyl-[cysteine desulfurase] + A + AMP + 2 H(+). It functions in the pathway cofactor biosynthesis; thiamine diphosphate biosynthesis. In terms of biological role, catalyzes the ATP-dependent transfer of a sulfur to tRNA to produce 4-thiouridine in position 8 of tRNAs, which functions as a near-UV photosensor. Also catalyzes the transfer of sulfur to the sulfur carrier protein ThiS, forming ThiS-thiocarboxylate. This is a step in the synthesis of thiazole, in the thiamine biosynthesis pathway. The sulfur is donated as persulfide by IscS. This Methanobrevibacter smithii (strain ATCC 35061 / DSM 861 / OCM 144 / PS) protein is Probable tRNA sulfurtransferase.